We begin with the raw amino-acid sequence, 85 residues long: Large ribosomal subunit protein bL27 (85 aa).

The segment at 1-20 (MAHKKAAGSSRNGRDSNPKM) is disordered.

This sequence belongs to the bacterial ribosomal protein bL27 family.

The protein is Large ribosomal subunit protein bL27 of Psychrobacter arcticus (strain DSM 17307 / VKM B-2377 / 273-4).